Here is a 485-residue protein sequence, read N- to C-terminus: Glycogen synthase (485 aa).

K20 serves as a coordination point for ADP-alpha-D-glucose.

This sequence belongs to the glycosyltransferase 1 family. Bacterial/plant glycogen synthase subfamily.

The enzyme catalyses [(1-&gt;4)-alpha-D-glucosyl](n) + ADP-alpha-D-glucose = [(1-&gt;4)-alpha-D-glucosyl](n+1) + ADP + H(+). Its pathway is glycan biosynthesis; glycogen biosynthesis. Functionally, synthesizes alpha-1,4-glucan chains using ADP-glucose. The polypeptide is Glycogen synthase (Vibrio vulnificus (strain CMCP6)).